The sequence spans 243 residues: UPF0280 protein Memar_1519 (243 aa).

The protein belongs to the UPF0280 family.

The sequence is that of UPF0280 protein Memar_1519 from Methanoculleus marisnigri (strain ATCC 35101 / DSM 1498 / JR1).